The following is a 386-amino-acid chain: Orphan methyltransferase M.SssI (386 aa).

Positions 11 to 386 constitute an SAM-dependent MTase C5-type domain; it reads LRVFEAFAGI…LEAIIDKIGG (376 aa). Cysteine 141 is an active-site residue.

Belongs to the class I-like SAM-binding methyltransferase superfamily. C5-methyltransferase family.

The catalysed reaction is a 2'-deoxycytidine in DNA + S-adenosyl-L-methionine = a 5-methyl-2'-deoxycytidine in DNA + S-adenosyl-L-homocysteine + H(+). This de novo methylase acts completely and exclusively on CG residues in DNA; methylates unmethylated and hemi-methylated DNA. The sequence is that of Orphan methyltransferase M.SssI (sssIM) from Spiroplasma monobiae (strain ATCC 33825 / MQ-1).